A 444-amino-acid polypeptide reads, in one-letter code: Adenylosuccinate synthetase (444 aa).

Residues 12–18 and 40–42 contribute to the GTP site; these read GDEGKGK and GHT. Residue Asp-13 is the Proton acceptor of the active site. Residues Asp-13 and Gly-40 each coordinate Mg(2+). IMP-binding positions include 13-16, 38-41, Thr-128, Arg-142, Gln-223, Thr-238, and Arg-302; these read DEGK and NAGH. Catalysis depends on His-41, which acts as the Proton donor. 298-304 contacts substrate; that stretch reads TTTGRRR. GTP is bound by residues Arg-304, 330–332, and 412–414; these read KLD and SLG.

It belongs to the adenylosuccinate synthetase family. Homodimer. It depends on Mg(2+) as a cofactor.

It localises to the cytoplasm. It carries out the reaction IMP + L-aspartate + GTP = N(6)-(1,2-dicarboxyethyl)-AMP + GDP + phosphate + 2 H(+). It participates in purine metabolism; AMP biosynthesis via de novo pathway; AMP from IMP: step 1/2. In terms of biological role, plays an important role in the de novo pathway of purine nucleotide biosynthesis. Catalyzes the first committed step in the biosynthesis of AMP from IMP. The protein is Adenylosuccinate synthetase of Synechococcus sp. (strain ATCC 27144 / PCC 6301 / SAUG 1402/1) (Anacystis nidulans).